The primary structure comprises 213 residues: Large ribosomal subunit protein uL1 (213 aa).

It belongs to the universal ribosomal protein uL1 family. As to quaternary structure, part of the 50S ribosomal subunit.

Functionally, binds directly to 23S rRNA. Probably involved in E site tRNA release. Protein L1 is also a translational repressor protein, it controls the translation of its operon by binding to its mRNA. This Methanosarcina barkeri (strain Fusaro / DSM 804) protein is Large ribosomal subunit protein uL1.